We begin with the raw amino-acid sequence, 147 residues long: 3-dehydroquinate dehydratase (147 aa).

Residue Tyr-23 is the Proton acceptor of the active site. Substrate contacts are provided by Asn-74, His-80, and Asp-87. Catalysis depends on His-100, which acts as the Proton donor. Substrate is bound by residues 101-102 and Arg-111; that span reads LS.

It belongs to the type-II 3-dehydroquinase family. Homododecamer.

It catalyses the reaction 3-dehydroquinate = 3-dehydroshikimate + H2O. It functions in the pathway metabolic intermediate biosynthesis; chorismate biosynthesis; chorismate from D-erythrose 4-phosphate and phosphoenolpyruvate: step 3/7. In terms of biological role, catalyzes a trans-dehydration via an enolate intermediate. The sequence is that of 3-dehydroquinate dehydratase from Clostridium botulinum (strain Loch Maree / Type A3).